A 284-amino-acid chain; its full sequence is Proton-translocating ferredoxin:NAD(+) oxidoreductase complex subunit B (284 aa).

A hydrophobic region spans residues 1-26 (MNTVIMILVVMTIIGLIFGLVLAYVN). The 4Fe-4S domain occupies 32 to 92 (EVNPLVDLVE…AEQVAKLTGK (61 aa)). [4Fe-4S] cluster-binding residues include cysteine 49, cysteine 52, cysteine 57, cysteine 75, cysteine 138, cysteine 142, cysteine 148, cysteine 152, cysteine 172, cysteine 175, cysteine 178, cysteine 182, cysteine 217, cysteine 220, cysteine 223, cysteine 227, cysteine 246, cysteine 249, cysteine 254, and cysteine 258. 4Fe-4S ferredoxin-type domains lie at 133–162 (GGPKACKYGCLGFGTCVKSCPFGAMAMGSN), 163–192 (GLPIIDTDICTGCGTCVSACPKQVLGFRPV), 206–237 (GGAVRKACSVGCLGCGLCAKNCPNDAIKVENN), and 239–269 (AVVDQSICASCSEATCLAKCPTGAIKAIVSG).

It belongs to the 4Fe4S bacterial-type ferredoxin family. RnfB subfamily. In terms of assembly, the complex is composed of six subunits: RnfA, RnfB, RnfC, RnfD, RnfE and RnfG. Requires [4Fe-4S] cluster as cofactor.

The protein resides in the cell membrane. Part of a membrane-bound complex that couples electron transfer with translocation of ions across the membrane. Couples electron transfer from reduced ferredoxin to NAD(+) with translocation of H(+) out of the cell. Essential for energy conservation during autotrophic growth. Contributes to ATP synthesis during heterotrophic growth. This chain is Proton-translocating ferredoxin:NAD(+) oxidoreductase complex subunit B, found in Clostridium ljungdahlii (strain ATCC 55383 / DSM 13528 / PETC).